The chain runs to 166 residues: Crossover junction endodeoxyribonuclease RuvC (166 aa).

Catalysis depends on residues Asp7, Glu68, and Asp141. Mg(2+) is bound by residues Asp7, Glu68, and Asp141.

The protein belongs to the RuvC family. In terms of assembly, homodimer which binds Holliday junction (HJ) DNA. The HJ becomes 2-fold symmetrical on binding to RuvC with unstacked arms; it has a different conformation from HJ DNA in complex with RuvA. In the full resolvosome a probable DNA-RuvA(4)-RuvB(12)-RuvC(2) complex forms which resolves the HJ. It depends on Mg(2+) as a cofactor.

The protein resides in the cytoplasm. The enzyme catalyses Endonucleolytic cleavage at a junction such as a reciprocal single-stranded crossover between two homologous DNA duplexes (Holliday junction).. Its function is as follows. The RuvA-RuvB-RuvC complex processes Holliday junction (HJ) DNA during genetic recombination and DNA repair. Endonuclease that resolves HJ intermediates. Cleaves cruciform DNA by making single-stranded nicks across the HJ at symmetrical positions within the homologous arms, yielding a 5'-phosphate and a 3'-hydroxyl group; requires a central core of homology in the junction. The consensus cleavage sequence is 5'-(A/T)TT(C/G)-3'. Cleavage occurs on the 3'-side of the TT dinucleotide at the point of strand exchange. HJ branch migration catalyzed by RuvA-RuvB allows RuvC to scan DNA until it finds its consensus sequence, where it cleaves and resolves the cruciform DNA. The chain is Crossover junction endodeoxyribonuclease RuvC from Caldicellulosiruptor saccharolyticus (strain ATCC 43494 / DSM 8903 / Tp8T 6331).